A 257-amino-acid polypeptide reads, in one-letter code: Small ribosomal subunit protein uS15m (257 aa).

A mitochondrion-targeting transit peptide spans 1 to 57 (MLRVAWRTLSLIRTRAVTQVLVPGLPGGGSAKFPFNQWGLQPRSLLLQAARGYVVRK). The segment at 225-257 (RALKAAAAAQKQAKRRNPDSPAKAIPKTLKDSQ) is disordered.

It belongs to the universal ribosomal protein uS15 family. As to quaternary structure, component of the mitochondrial small ribosomal subunit (mt-SSU). Mature mammalian 55S mitochondrial ribosomes consist of a small (28S) and a large (39S) subunit. The 28S small subunit contains a 12S ribosomal RNA (12S mt-rRNA) and 30 different proteins. The 39S large subunit contains a 16S rRNA (16S mt-rRNA), a copy of mitochondrial valine transfer RNA (mt-tRNA(Val)), which plays an integral structural role, and 52 different proteins. Interacts with METTL17.

It localises to the mitochondrion matrix. The sequence is that of Small ribosomal subunit protein uS15m (MRPS15) from Homo sapiens (Human).